The sequence spans 827 residues: Glycerol-3-phosphate acyltransferase 1, mitochondrial (827 aa).

At 1–87 the chain is on the cytoplasmic side; that stretch reads MEESSVTVGT…FFNPSIPSLG (87 aa). Residues 80–120 are important for mitochondrial localization; the sequence is NPSIPSLGLRNVIYINETHTRHRGWLARRLSYILFVQERDV. An intramembrane segment occupies 88-118; sequence LRNVIYINETHTRHRGWLARRLSYILFVQER. Residues 119-827 are Cytoplasmic-facing; sequence DVHKGMFATS…LEYILSFVVL (709 aa). The HXXXXD motif signature appears at 230–235; that stretch reads HRSHID. CoA-binding residues include Arg278, Arg279, Lys288, Arg293, and Arg328. Residue Ser380 is modified to Phosphoserine. Arg462 provides a ligand contact to CoA. Phosphoserine is present on residues Ser687 and Ser694. An N6-acetyllysine mark is found at Lys779 and Lys783.

This sequence belongs to the GPAT/DAPAT family. As to expression, highest levels in liver, intermediate levels in muscle and kidney, and lowest levels in lung and brain.

It localises to the mitochondrion outer membrane. The enzyme catalyses sn-glycerol 3-phosphate + an acyl-CoA = a 1-acyl-sn-glycero-3-phosphate + CoA. It carries out the reaction (9Z,12Z)-octadecadienoyl-CoA + sn-glycerol 3-phosphate = 1-(9Z,12Z)-octadecadienoyl-sn-glycero-3-phosphate + CoA. It catalyses the reaction sn-glycerol 3-phosphate + (9Z)-octadecenoyl-CoA = 1-(9Z-octadecenoyl)-sn-glycero-3-phosphate + CoA. The catalysed reaction is sn-glycerol 3-phosphate + octadecanoyl-CoA = 1-octadecanoyl-sn-glycero-3-phosphate + CoA. The enzyme catalyses sn-glycerol 3-phosphate + hexadecanoyl-CoA = 1-hexadecanoyl-sn-glycero-3-phosphate + CoA. It carries out the reaction dodecanoyl-CoA + sn-glycerol 3-phosphate = 1-dodecanoyl-sn-glycerol 3-phosphate + CoA. It catalyses the reaction 1-acyl-sn-glycero-3-phospho-(1'-sn-glycerol) + an acyl-CoA = a 1,2-diacyl-sn-glycero-3-phospho-(1'-sn-glycerol) + CoA. Its pathway is phospholipid metabolism; CDP-diacylglycerol biosynthesis; CDP-diacylglycerol from sn-glycerol 3-phosphate: step 1/3. Mitochondrial membrane protein that catalyzes the essential first step of biosynthesis of glycerolipids such as triglycerides, phosphatidic acids and lysophosphatidic acids. Esterifies acyl-group from acyl-coenzyme A (acyl-CoA) to the sn-1 position of glycerol-3-phosphate, to produce lysophosphatidic acid. Has a narrow hydrophobic binding cleft that selects for a linear acyl chain. Catalytic activity is higher for substrates with a 16-carbon acyl chain. The polypeptide is Glycerol-3-phosphate acyltransferase 1, mitochondrial (Mus musculus (Mouse)).